The primary structure comprises 353 residues: Protein O-mannose kinase (353 aa).

The Cytoplasmic portion of the chain corresponds to 1–19; that stretch reads MEKKAHFVKRDFPPREAPS. A helical; Signal-anchor for type II membrane protein transmembrane segment spans residues 20-40; sequence LLLLLLVVAVLLLNALLYLYL. Residues 41 to 353 are Lumenal-facing; the sequence is GNLHGSSGRA…AAMPSTREML (313 aa). One can recognise a Protein kinase domain in the interval 83 to 353; sequence VRKLKCVGEG…AAMPSTREML (271 aa). Asn-163 and Asn-237 each carry an N-linked (GlcNAc...) asparagine glycan.

Belongs to the protein kinase superfamily. Ser/Thr protein kinase family. STKL subfamily.

It is found in the endoplasmic reticulum membrane. It carries out the reaction 3-O-[beta-D-GalNAc-(1-&gt;3)-beta-D-GlcNAc-(1-&gt;4)-alpha-D-Man]-L-Thr-[protein] + ATP = 3-O-[beta-D-GalNAc-(1-&gt;3)-beta-D-GlcNAc-(1-&gt;4)-(O-6-P-alpha-D-Man)]-Thr-[protein] + ADP + H(+). Its function is as follows. Protein O-mannose kinase that specifically mediates phosphorylation at the 6-position of an O-mannose of the trisaccharide (N-acetylgalactosamine (GalNAc)-beta-1,3-N-acetylglucosamine (GlcNAc)-beta-1,4-mannose) to generate phosphorylated O-mannosyl trisaccharide (N-acetylgalactosamine-beta-1,3-N-acetylglucosamine-beta-1,4-(phosphate-6-)mannose). Phosphorylated O-mannosyl trisaccharide is a carbohydrate structure present in alpha-dystroglycan (DAG1), which is required for binding laminin G-like domain-containing extracellular proteins with high affinity. Only shows kinase activity when the GalNAc-beta-3-GlcNAc-beta-terminus is linked to the 4-position of O-mannose, suggesting that this disaccharide serves as the substrate recognition motif. The polypeptide is Protein O-mannose kinase (POMK) (Gallus gallus (Chicken)).